We begin with the raw amino-acid sequence, 133 residues long: Ribonucleases P/MRP protein subunit POP8 (133 aa).

As to quaternary structure, component of nuclear RNase P and RNase MRP complexes. RNase P consists of an RNA moiety and at least 9 protein subunits including POP1, POP3, POP4, POP5, POP6, POP7, POP8, RPP1 and RPR2. RNase MRP complex consists of an RNA moiety and at least 10 protein subunits including POP1, POP3, POP4, POP5, POP6, POP7, POP8, RMP1, RPP1 and SNM1, many of which are shared with the RNase P complex.

Its subcellular location is the nucleus. The catalysed reaction is Endonucleolytic cleavage of RNA, removing 5'-extranucleotides from tRNA precursor.. In terms of biological role, component of ribonuclease P, a protein complex that generates mature tRNA molecules by cleaving their 5'-ends. Also a component of RNase MRP, which cleaves pre-rRNA sequences. This chain is Ribonucleases P/MRP protein subunit POP8 (POP8), found in Saccharomyces cerevisiae (strain ATCC 204508 / S288c) (Baker's yeast).